The chain runs to 775 residues: Coiled-coil domain-containing protein R3HCC1L (775 aa).

Composition is skewed to basic and acidic residues over residues 1-16 (MQQE…KRPD) and 65-112 (ESQR…KGAE). 2 disordered regions span residues 1-127 (MQQE…HRAP) and 235-262 (LSSD…DISV). The tract at residues 7-27 (RCRVRTKRPDMALYVPKARRG) is EJC-binding motif; may mediate interaction with the EJC. Residues 235-247 (LSSDSETAPSSLE) show a composition bias toward polar residues. Position 671 is a phosphoserine (serine 671). Threonine 695 is subject to Phosphothreonine. A coiled-coil region spans residues 734–766 (RSKQSKTEREAELRKLQEARERKRLEAKQREDI). Residues 755–775 (RKRLEAKQREDIWEGRDQSVV) form a disordered region.

May interact with the exon junction complex (EJC) composed at least of CASC3, EIF4A3, MAGOH and RBM8A.

In Mus musculus (Mouse), this protein is Coiled-coil domain-containing protein R3HCC1L (R3hcc1l).